A 146-amino-acid polypeptide reads, in one-letter code: Transcriptional repressor NrdR (146 aa).

A zinc finger spans residues 3-34; it reads CPFCQNPDTKVIDTRISDDGHSIRRRRVCPKC. The region spanning 46–136 is the ATP-cone domain; the sequence is LLVTKRSGGV…VYQNFAGLED (91 aa).

Belongs to the NrdR family. It depends on Zn(2+) as a cofactor.

In terms of biological role, negatively regulates transcription of bacterial ribonucleotide reductase nrd genes and operons by binding to NrdR-boxes. This is Transcriptional repressor NrdR from Bifidobacterium longum (strain NCC 2705).